Consider the following 875-residue polypeptide: Protein translocase subunit SecA (875 aa).

Residues Gln87, 105–109 (GEGKT), and Asp512 each bind ATP. Zn(2+) is bound by residues Cys860, Cys862, Cys871, and His872.

Belongs to the SecA family. As to quaternary structure, monomer and homodimer. Part of the essential Sec protein translocation apparatus which comprises SecA, SecYEG and auxiliary proteins SecDF-YajC and YidC. Requires Zn(2+) as cofactor.

Its subcellular location is the cell inner membrane. The protein localises to the cytoplasm. The catalysed reaction is ATP + H2O + cellular proteinSide 1 = ADP + phosphate + cellular proteinSide 2.. Part of the Sec protein translocase complex. Interacts with the SecYEG preprotein conducting channel. Has a central role in coupling the hydrolysis of ATP to the transfer of proteins into and across the cell membrane, serving both as a receptor for the preprotein-SecB complex and as an ATP-driven molecular motor driving the stepwise translocation of polypeptide chains across the membrane. This Buchnera aphidicola subsp. Acyrthosiphon pisum (strain 5A) protein is Protein translocase subunit SecA.